The following is a 139-amino-acid chain: Low molecular weight protein-tyrosine-phosphatase PtpB (139 aa).

Residue C7 is the Nucleophile of the active site. R13 is a catalytic residue. The active-site Proton donor is the D111.

This sequence belongs to the low molecular weight phosphotyrosine protein phosphatase family.

The enzyme catalyses O-phospho-L-tyrosyl-[protein] + H2O = L-tyrosyl-[protein] + phosphate. Inhibited by N-ethylmaleimide and sodium orthovanadate. Functionally, dephosphorylates the phosphotyrosine-containing proteins. This is Low molecular weight protein-tyrosine-phosphatase PtpB (ptpB) from Staphylococcus aureus.